The sequence spans 236 residues: Baculoviral IAP repeat-containing protein 8 (236 aa).

One copy of the BIR repeat lies at 7–70 (RLITFGTWMY…KWYPGCKYLL (64 aa)). 4 residues coordinate Zn(2+): Cys-39, Cys-42, His-59, and Cys-66. Residues 189–224 (CKICMDRHIAVVFIPCGHLVTCKQCAEAVDRCPMCS) form an RING-type zinc finger.

Belongs to the IAP family. In terms of assembly, binds to caspase-9.

Its subcellular location is the cytoplasm. Its function is as follows. Protects against apoptosis mediated by BAX. This chain is Baculoviral IAP repeat-containing protein 8 (BIRC8), found in Pan troglodytes (Chimpanzee).